A 296-amino-acid chain; its full sequence is Probable deoxyuridine 5'-triphosphate nucleotidohydrolase (296 aa).

Positions 66 to 102 (EIDKNIVKNLEDKVNCLEQDVQYLKNELKKKDADWQQ) form a coiled coil.

Belongs to the dUTPase family.

It carries out the reaction dUTP + H2O = dUMP + diphosphate + H(+). It functions in the pathway pyrimidine metabolism; dUMP biosynthesis; dUMP from dCTP (dUTP route): step 2/2. Its function is as follows. This enzyme is involved in nucleotide metabolism: it produces dUMP, the immediate precursor of thymidine nucleotides and it decreases the intracellular concentration of dUTP so that uracil cannot be incorporated into DNA. This chain is Probable deoxyuridine 5'-triphosphate nucleotidohydrolase, found in Acheta domesticus (House cricket).